The sequence spans 152 residues: Phosphoribosyl-AMP cyclohydrolase (152 aa).

Aspartate 92 lines the Mg(2+) pocket. Cysteine 93 is a Zn(2+) binding site. Mg(2+)-binding residues include aspartate 94 and aspartate 96. 2 residues coordinate Zn(2+): cysteine 111 and cysteine 118.

This sequence belongs to the PRA-CH family. Homodimer. Requires Mg(2+) as cofactor. The cofactor is Zn(2+).

The protein resides in the cytoplasm. The catalysed reaction is 1-(5-phospho-beta-D-ribosyl)-5'-AMP + H2O = 1-(5-phospho-beta-D-ribosyl)-5-[(5-phospho-beta-D-ribosylamino)methylideneamino]imidazole-4-carboxamide. It functions in the pathway amino-acid biosynthesis; L-histidine biosynthesis; L-histidine from 5-phospho-alpha-D-ribose 1-diphosphate: step 3/9. Its function is as follows. Catalyzes the hydrolysis of the adenine ring of phosphoribosyl-AMP. The chain is Phosphoribosyl-AMP cyclohydrolase from Sinorhizobium fredii (strain NBRC 101917 / NGR234).